Here is a 305-residue protein sequence, read N- to C-terminus: Oxygen-dependent coproporphyrinogen-III oxidase (305 aa).

Ser98 contacts substrate. His102 and His112 together coordinate a divalent metal cation. Residue His112 is the Proton donor of the active site. 114-116 (NVR) provides a ligand contact to substrate. Residues His151 and His181 each contribute to the a divalent metal cation site. An important for dimerization region spans residues 246 to 281 (YVEFNLVYDRGTLFGLQSGGRTESILMSMPPLARWE). 264-266 (GGR) serves as a coordination point for substrate.

The protein belongs to the aerobic coproporphyrinogen-III oxidase family. Homodimer. A divalent metal cation serves as cofactor.

The protein resides in the cytoplasm. It catalyses the reaction coproporphyrinogen III + O2 + 2 H(+) = protoporphyrinogen IX + 2 CO2 + 2 H2O. Its pathway is porphyrin-containing compound metabolism; protoporphyrin-IX biosynthesis; protoporphyrinogen-IX from coproporphyrinogen-III (O2 route): step 1/1. Its function is as follows. Involved in the heme biosynthesis. Catalyzes the aerobic oxidative decarboxylation of propionate groups of rings A and B of coproporphyrinogen-III to yield the vinyl groups in protoporphyrinogen-IX. The polypeptide is Oxygen-dependent coproporphyrinogen-III oxidase (Vibrio vulnificus (strain CMCP6)).